We begin with the raw amino-acid sequence, 395 residues long: Acetate kinase (395 aa).

Asparagine 8 contributes to the Mg(2+) binding site. Residue lysine 15 participates in ATP binding. Residue arginine 90 participates in substrate binding. Aspartate 147 (proton donor/acceptor) is an active-site residue. ATP contacts are provided by residues 207-211 (HLGNG), 284-286 (DMR), and 330-334 (GIGEN). Residue glutamate 383 coordinates Mg(2+).

It belongs to the acetokinase family. In terms of assembly, homodimer. It depends on Mg(2+) as a cofactor. Requires Mn(2+) as cofactor.

The protein resides in the cytoplasm. It catalyses the reaction acetate + ATP = acetyl phosphate + ADP. It functions in the pathway metabolic intermediate biosynthesis; acetyl-CoA biosynthesis; acetyl-CoA from acetate: step 1/2. In terms of biological role, catalyzes the formation of acetyl phosphate from acetate and ATP. Can also catalyze the reverse reaction. This is Acetate kinase from Enterococcus faecalis (strain ATCC 700802 / V583).